The primary structure comprises 302 residues: Lactoylglutathione lyase (302 aa).

VOC domains are found at residues 11–153 (KLNH…LVSQ) and 166–301 (RFNH…VIEQ). His-14 lines the Zn(2+) pocket. Arg-18 contacts substrate. Glu-75 lines the Zn(2+) pocket. Asn-79, Arg-99, and His-103 together coordinate substrate. 2 residues coordinate Zn(2+): His-103 and Glu-149. The active-site Proton donor/acceptor is Glu-149.

Belongs to the glyoxalase I family. In terms of assembly, monomer. Zn(2+) serves as cofactor. It depends on Cu(2+) as a cofactor. The cofactor is Ni(2+). Mn(2+) is required as a cofactor.

The catalysed reaction is (R)-S-lactoylglutathione = methylglyoxal + glutathione. It functions in the pathway secondary metabolite metabolism; methylglyoxal degradation; (R)-lactate from methylglyoxal: step 1/2. Its function is as follows. Catalyzes the conversion of hemimercaptal, formed from methylglyoxal and glutathione, to S-lactoylglutathione. This Schizosaccharomyces pombe (strain 972 / ATCC 24843) (Fission yeast) protein is Lactoylglutathione lyase (glo1).